The primary structure comprises 250 residues: Probable transcriptional regulatory protein PERMA_0079 (250 aa).

It belongs to the TACO1 family.

Its subcellular location is the cytoplasm. The protein is Probable transcriptional regulatory protein PERMA_0079 of Persephonella marina (strain DSM 14350 / EX-H1).